Consider the following 65-residue polypeptide: Kunitz-type serine protease inhibitor IX (65 aa).

Residues 7–57 (CNLLPETGRCNALIPAFYYNSHLHKCQKFNYGGCGGNANNFKTIDECQRTC) form the BPTI/Kunitz inhibitor domain. Intrachain disulfides connect Cys-7-Cys-57, Cys-16-Cys-40, and Cys-32-Cys-53.

Belongs to the venom Kunitz-type family. In terms of tissue distribution, expressed by the venom gland.

It is found in the secreted. Dual-function toxin that inhibits both serine proteases (high activity on chymotrypsin (Ki = 18 nM), and low activity on elastase) and voltage-gated potassium channels Kv1.3/KCNA3 (IC(50) = 120.0 nM). This Bungarus fasciatus (Banded krait) protein is Kunitz-type serine protease inhibitor IX.